The following is a 145-amino-acid chain: Leghemoglobin-1 (145 aa).

The 143-residue stretch at 3–145 folds into the Globin domain; it reads AFSDKQEALV…ELAAAIKKAY (143 aa). Tyrosine 26 and tyrosine 31 each carry nitrated tyrosine. Serine 46 contacts heme b. Serine 46 carries the post-translational modification Phosphoserine. Residue histidine 62 participates in O2 binding. Heme b contacts are provided by lysine 65, histidine 93, and lysine 96. At tyrosine 134 the chain carries Nitrated tyrosine.

It belongs to the plant globin family. Monomer. Post-translationally, nitrated in effective nodules and particularly in hypoxic conditions; this mechanism may play a protective role in the symbiosis by buffering toxic peroxynitrite NO(2)(-). Nitration level decrease during nodule senescence. Phosphorylation at Ser-46 disrupts the molecular environment of its porphyrin ring oxygen binding pocket, thus leading to a reduced oxygen consumption and to the delivery of oxygen O(2) to symbiosomes. Root nodules.

It localises to the cytoplasm. The protein localises to the cytosol. Its subcellular location is the nucleus. Leghemoglobin that reversibly binds oxygen O(2) through a pentacoordinated heme iron. In root nodules, facilitates the diffusion of oxygen to the bacteroids while preventing the bacterial nitrogenase from being inactivated by buffering dioxygen, nitric oxide and carbon monoxide, and promoting the formation of reactive oxygen species (ROS, e.g. H(2)O(2)). This role is essential for symbiotic nitrogen fixation (SNF). The sequence is that of Leghemoglobin-1 from Vigna unguiculata (Cowpea).